Here is a 93-residue protein sequence, read N- to C-terminus: Large ribosomal subunit protein uL23cz/uL23cy (93 aa).

This sequence belongs to the universal ribosomal protein uL23 family. In terms of assembly, part of the 50S ribosomal subunit.

The protein localises to the plastid. Its subcellular location is the chloroplast. Binds to 23S rRNA. This is Large ribosomal subunit protein uL23cz/uL23cy (rpl23-A) from Gossypium barbadense (Sea Island cotton).